The sequence spans 226 residues: ADP-ribosylation factor-like protein 6-interacting protein 6 (226 aa).

Positions 1-49 (MSFVESWRFAGARRRRQVTPGPATRPGYSDYTQGDSWGEGEGDEDEGCD) are disordered. Phosphoserine occurs at positions 2 and 36. Residues 38 to 48 (GEGEGDEDEGC) are compositionally biased toward acidic residues. Ser-60, Ser-65, and Ser-80 each carry phosphoserine. A run of 3 helical transmembrane segments spans residues 111–131 (ILCSLLFAVLLAFLLAIAYMI), 150–170 (LLGFWSLLIISLTAGLSCCSF), and 205–225 (MGYSMAILNGIVAALTVAWCL).

The protein belongs to the ARL6IP6 family.

It localises to the nucleus inner membrane. This is ADP-ribosylation factor-like protein 6-interacting protein 6 (Arl6ip6) from Mus musculus (Mouse).